The following is a 152-amino-acid chain: MSEKYVVTWDMLQMQARKLAHRLLPADQWTGIIAVSRGGLVPAALLARELGIRHVDTVCISSYDHDNQREMKVLKRAEGDGEGFIVIDDLVDTGGTAKAIREMYPKAHFVTIFAKPAGRPLVDDYVVDIPQDTWIEQPWDMAVTFVPPIGGR.

Residues 37–38, Arg-69, and 88–96 each bind 5-phospho-alpha-D-ribose 1-diphosphate; these read RG and DDLVDTGGT. A GMP-binding site is contributed by Arg-69. Position 89 (Asp-89) interacts with Mg(2+). Guanine-binding residues include Asp-92 and Ile-135. Xanthine-binding residues include Asp-92 and Ile-135. GMP contacts are provided by residues 92 to 96 and 134 to 135; these read DTGGT and WI.

The protein belongs to the purine/pyrimidine phosphoribosyltransferase family. XGPT subfamily. In terms of assembly, homotetramer. Mg(2+) is required as a cofactor.

The protein resides in the cell inner membrane. It catalyses the reaction GMP + diphosphate = guanine + 5-phospho-alpha-D-ribose 1-diphosphate. The enzyme catalyses XMP + diphosphate = xanthine + 5-phospho-alpha-D-ribose 1-diphosphate. It carries out the reaction IMP + diphosphate = hypoxanthine + 5-phospho-alpha-D-ribose 1-diphosphate. The protein operates within purine metabolism; GMP biosynthesis via salvage pathway; GMP from guanine: step 1/1. Its pathway is purine metabolism; XMP biosynthesis via salvage pathway; XMP from xanthine: step 1/1. Functionally, purine salvage pathway enzyme that catalyzes the transfer of the ribosyl-5-phosphate group from 5-phospho-alpha-D-ribose 1-diphosphate (PRPP) to the N9 position of the 6-oxopurines guanine and xanthine to form the corresponding ribonucleotides GMP (guanosine 5'-monophosphate) and XMP (xanthosine 5'-monophosphate), with the release of PPi. To a lesser extent, also acts on hypoxanthine. This chain is Xanthine-guanine phosphoribosyltransferase, found in Serratia proteamaculans (strain 568).